We begin with the raw amino-acid sequence, 382 residues long: Pyrimidine monooxygenase RutA (382 aa).

FMN contacts are provided by residues 68-69, Asn134, Glu143, 159-160, and Ser209; these read IK and RY.

The protein belongs to the NtaA/SnaA/DszA monooxygenase family. RutA subfamily.

The enzyme catalyses uracil + FMNH2 + NADH + O2 = (Z)-3-ureidoacrylate + FMN + NAD(+) + H2O + H(+). It catalyses the reaction thymine + FMNH2 + NADH + O2 = (Z)-2-methylureidoacrylate + FMN + NAD(+) + H2O + H(+). Catalyzes the pyrimidine ring opening between N-3 and C-4 by an unusual flavin hydroperoxide-catalyzed mechanism, adding oxygen atoms in the process to yield ureidoacrylate peracid, that immediately reacts with FMN forming ureidoacrylate and FMN-N(5)-oxide. The FMN-N(5)-oxide reacts spontaneously with NADH to produce FMN. Requires the flavin reductase RutF to regenerate FMN in vivo. This is Pyrimidine monooxygenase RutA from Escherichia coli (strain B / BL21-DE3).